A 497-amino-acid polypeptide reads, in one-letter code: NADH-quinone oxidoreductase subunit N (497 aa).

13 consecutive transmembrane segments (helical) span residues 12–32 (MAPE…DLAL), 40–60 (PLAW…AAMI), 80–100 (AFKF…AEWA), 116–136 (LFAL…TLFV), 166–186 (VING…VFGL), 208–228 (LALA…TVPF), 240–260 (PVPA…ALLL), 284–304 (MQPI…VVAL), 316–336 (SGIA…WAMI), 341–361 (MYLL…AHIV), 383–403 (AAAL…AGFI), 430–450 (TVIS…RPTF), and 457–477 (LPAG…AIGW).

It belongs to the complex I subunit 2 family. NDH-1 is composed of 14 different subunits. Subunits NuoA, H, J, K, L, M, N constitute the membrane sector of the complex.

Its subcellular location is the cell membrane. The enzyme catalyses a quinone + NADH + 5 H(+)(in) = a quinol + NAD(+) + 4 H(+)(out). Its function is as follows. NDH-1 shuttles electrons from NADH, via FMN and iron-sulfur (Fe-S) centers, to quinones in the respiratory chain. The immediate electron acceptor for the enzyme in this species is believed to be a menaquinone. Couples the redox reaction to proton translocation (for every two electrons transferred, four hydrogen ions are translocated across the cytoplasmic membrane), and thus conserves the redox energy in a proton gradient. The sequence is that of NADH-quinone oxidoreductase subunit N from Geobacillus kaustophilus (strain HTA426).